Consider the following 150-residue polypeptide: Large ribosomal subunit protein uL22c (150 aa).

The protein belongs to the universal ribosomal protein uL22 family. Part of the 50S ribosomal subunit.

The protein resides in the plastid. The protein localises to the chloroplast. In terms of biological role, this protein binds specifically to 23S rRNA. Its function is as follows. The globular domain of the protein is located near the polypeptide exit tunnel on the outside of the subunit, while an extended beta-hairpin is found that lines the wall of the exit tunnel in the center of the 70S ribosome. In Fagopyrum esculentum subsp. ancestrale (Wild buckwheat), this protein is Large ribosomal subunit protein uL22c (rpl22).